We begin with the raw amino-acid sequence, 92 residues long: Protein S100-A12 (92 aa).

EF-hand domains follow at residues 13–48 (NIFHQYSVRLGHYDTLIKRELKQLITKELPNTLKNT) and 49–84 (KDQGTIDKIFQNLDANQDEQVSFKEFVVLVTDVLIT). Cu cation is bound at residue His16. Residue His16 coordinates Zn(2+). Residues Ser19 and His24 each contribute to the Ca(2+) site. Asp26 contributes to the Cu cation binding site. Residue Asp26 participates in Zn(2+) binding. Residues Thr27 and Glu32 each coordinate Ca(2+). Residues 38-53 (TKELPNTLKNTKDQGT) are hinge domain. The Ca(2+) site is built by Asp62, Asn64, Asp66, Gln68, and Glu73. Positions 86 and 90 each coordinate Cu cation. 2 residues coordinate Zn(2+): His86 and His90.

The protein belongs to the S-100 family. In terms of assembly, homodimer. Homooligomer (tetramer or hexamer) in the presence of calcium, zinc and copper ions. Interacts with AGER and both calcium and zinc are essential for the interaction. Interacts with CACYBP in a calcium-dependent manner. In terms of tissue distribution, found essentially in granulocytes with small amounts found in lymphocytes.

It is found in the secreted. The protein resides in the cytoplasm. It localises to the cytoskeleton. The protein localises to the cell membrane. In terms of biological role, S100A12 is a calcium-, zinc- and copper-binding protein which plays a prominent role in the regulation of inflammatory processes and immune response. Its pro-inflammatory activity involves recruitment of leukocytes, promotion of cytokine and chemokine production, and regulation of leukocyte adhesion and migration. Acts as an alarmin or a danger associated molecular pattern (DAMP) molecule and stimulates innate immune cells via binding to receptor for advanced glycation endproducts (AGER). Binding to AGER activates the MAP-kinase and NF-kappa-B signaling pathways leading to production of pro-inflammatory cytokines and up-regulation of cell adhesion molecules ICAM1 and VCAM1. Acts as a monocyte and mast cell chemoattractant. Can stimulate mast cell degranulation and activation which generates chemokines, histamine and cytokines inducing further leukocyte recruitment to the sites of inflammation. Can inhibit the activity of matrix metalloproteinases; MMP2, MMP3 and MMP9 by chelating Zn(2+) from their active sites. This Sus scrofa (Pig) protein is Protein S100-A12 (S100A12).